Here is a 240-residue protein sequence, read N- to C-terminus: Mitochondrial transcription rescue factor 1 (240 aa).

A mitochondrion-targeting transit peptide spans 1-84 (MAMASVKLLA…ECIFPFSVRL (84 aa)). The segment at 95-127 (KKSLQKVDEEDSDEESHHDEMSEQEEELEDDPT) is disordered. A phosphoserine mark is found at Ser-106 and Ser-116. Over residues 116–126 (SEQEEELEDDP) the composition is skewed to acidic residues. An S4 RNA-binding domain is found at 142-217 (FRYDVVLKTG…LKKVFEEKTE (76 aa)).

As to quaternary structure, monomer. Interacts with POLRMT. Interacts (via S4 domain) with MTRFR (via C-terminus). Associates with mitoribosomal S39 large subunit, peptidyl tRNA and nascent chain.

Its subcellular location is the mitochondrion matrix. Functionally, mitochondrial RNA-binding protein involved in mitochondrial transcription regulation. Functions as a protective factor to maintain proper mitochondrial RNA level during stress. Acts at the transcription level and its protective function depends on its RNA binding ability. Part of a mitoribosome-associated quality control pathway that prevents aberrant translation by responding to interruptions during elongation. As heterodimer with MTRF, ejects the unfinished nascent chain and peptidyl transfer RNA (tRNA), respectively, from stalled ribosomes. Recruitment of mitoribosome biogenesis factors to these quality control intermediates suggests additional roles for MTRES1 and MTRF during mitoribosome rescue. The polypeptide is Mitochondrial transcription rescue factor 1 (Homo sapiens (Human)).